Consider the following 331-residue polypeptide: MATGQKLMRAIRVFEFGGPEVLKLQSDVVVPVPQSHQVLIKVHACGVNPVETYIRSGAYSRKPALPYTPGSDVAGIIESVGDKVSAFKKGDRVFCYSTVSGGYAEFALAADDTIYPLPETLNFRQGAALGIPYFTACRALFHSARARAGESVLVHGASGGVGLATCQIARAHGLKVLGTAGSEEGKKLVLQNGAHEVFNHKEANYIDKIKMSVGDKDKGVDVIIEMLANENLSNDLKLLSHGGRVVVVGCRGPIEINPRDTMAKETSIIGVSLSSSTKEEFQQFAGLLQAGIEKGWVKPVIGSEYPLEKAAQAHEDIIHGSGKTGKMILLL.

Residue Ala-2 is modified to N-acetylalanine. The residue at position 23 (Lys-23) is an N6-acetyllysine. Ser-35 is subject to Phosphoserine. Residues Tyr-53, 158 to 161 (SGGV), and Gly-181 contribute to the NADP(+) site. The residue at position 186 (Lys-186) is an N6-acetyllysine. NADP(+)-binding positions include His-200, Asn-231, 248-251 (VGCR), and 271-273 (VSL). The residue at position 298 (Lys-298) is an N6-succinyllysine.

It belongs to the zinc-containing alcohol dehydrogenase family. Quinone oxidoreductase subfamily. Homotetramer.

The protein localises to the cytoplasm. It catalyses the reaction 2 a quinone + NADPH + H(+) = 2 a 1,4-benzosemiquinone + NADP(+). Its function is as follows. Does not have alcohol dehydrogenase activity. Binds NADP and acts through a one-electron transfer process. Orthoquinones, such as 1,2-naphthoquinone or 9,10-phenanthrenequinone, are the best substrates (in vitro). May act in the detoxification of xenobiotics. Interacts with (AU)-rich elements (ARE) in the 3'-UTR of target mRNA species and enhances their stability. NADPH binding interferes with mRNA binding. The sequence is that of Quinone oxidoreductase (Cryz) from Mus musculus (Mouse).